The primary structure comprises 131 residues: Small ribosomal subunit protein uS8 (131 aa).

It belongs to the universal ribosomal protein uS8 family. Part of the 30S ribosomal subunit. Contacts proteins S5 and S12.

In terms of biological role, one of the primary rRNA binding proteins, it binds directly to 16S rRNA central domain where it helps coordinate assembly of the platform of the 30S subunit. The sequence is that of Small ribosomal subunit protein uS8 from Janthinobacterium sp. (strain Marseille) (Minibacterium massiliensis).